We begin with the raw amino-acid sequence, 450 residues long: Putative zinc metalloprotease TP_0600 (450 aa).

H18 contributes to the Zn(2+) binding site. The active site involves E19. H22 contributes to the Zn(2+) binding site. A helical transmembrane segment spans residues 102–124 (IAFAGPLANVLMAVMVLALVSAL). The 79-residue stretch at 200–278 (TITPDRDAHT…SVVLTVLRSG (79 aa)) folds into the PDZ domain. Helical transmembrane passes span 384-406 (VCVS…LILF) and 421-443 (VLYY…AFWN).

Belongs to the peptidase M50B family. The cofactor is Zn(2+).

Its subcellular location is the cell inner membrane. In Treponema pallidum (strain Nichols), this protein is Putative zinc metalloprotease TP_0600.